The primary structure comprises 269 residues: 3-methyl-2-oxobutanoate hydroxymethyltransferase (269 aa).

Mg(2+) contacts are provided by Asp-50 and Asp-89. 3-methyl-2-oxobutanoate-binding positions include 50 to 51 (DS), Asp-89, and Lys-119. Mg(2+) is bound at residue Glu-121. Glu-187 (proton acceptor) is an active-site residue.

This sequence belongs to the PanB family. In terms of assembly, homodecamer; pentamer of dimers. Mg(2+) is required as a cofactor.

The protein localises to the cytoplasm. The enzyme catalyses 3-methyl-2-oxobutanoate + (6R)-5,10-methylene-5,6,7,8-tetrahydrofolate + H2O = 2-dehydropantoate + (6S)-5,6,7,8-tetrahydrofolate. Its pathway is cofactor biosynthesis; (R)-pantothenate biosynthesis; (R)-pantoate from 3-methyl-2-oxobutanoate: step 1/2. Its function is as follows. Catalyzes the reversible reaction in which hydroxymethyl group from 5,10-methylenetetrahydrofolate is transferred onto alpha-ketoisovalerate to form ketopantoate. The polypeptide is 3-methyl-2-oxobutanoate hydroxymethyltransferase (Corynebacterium efficiens (strain DSM 44549 / YS-314 / AJ 12310 / JCM 11189 / NBRC 100395)).